Here is a 241-residue protein sequence, read N- to C-terminus: Biosynthetic peptidoglycan transglycosylase (241 aa).

The chain crosses the membrane as a helical span at residues 18–38 (GVIGIIALWMAGILIFAFLPV).

The protein belongs to the glycosyltransferase 51 family.

Its subcellular location is the cell inner membrane. It carries out the reaction [GlcNAc-(1-&gt;4)-Mur2Ac(oyl-L-Ala-gamma-D-Glu-L-Lys-D-Ala-D-Ala)](n)-di-trans,octa-cis-undecaprenyl diphosphate + beta-D-GlcNAc-(1-&gt;4)-Mur2Ac(oyl-L-Ala-gamma-D-Glu-L-Lys-D-Ala-D-Ala)-di-trans,octa-cis-undecaprenyl diphosphate = [GlcNAc-(1-&gt;4)-Mur2Ac(oyl-L-Ala-gamma-D-Glu-L-Lys-D-Ala-D-Ala)](n+1)-di-trans,octa-cis-undecaprenyl diphosphate + di-trans,octa-cis-undecaprenyl diphosphate + H(+). It functions in the pathway cell wall biogenesis; peptidoglycan biosynthesis. In terms of biological role, peptidoglycan polymerase that catalyzes glycan chain elongation from lipid-linked precursors. In Yersinia pseudotuberculosis serotype O:3 (strain YPIII), this protein is Biosynthetic peptidoglycan transglycosylase.